The primary structure comprises 700 residues: MAQDVLTDLKKVRNIGIMAHIDAGKTTTTERILFYTGVNYKIGETHDGASTTDWMEQEQERGITITSAAVTCFWNQNQINIIDTPGHVDFTVEVERSLRVLDGAVAVFDGKEGVEPQSEQVWRQADKYDVPRICFVNKMDKLGADFYFTVQTIKDRLGARPLVIQLPIGAEDTFEGVVDLVEMNAKVWTGETKLGEKYEVKEIPADLAEKAEQYRQELLEAVAESDEALLDKFFGGEELTIDEIKGAIRKMTVNSEAYPVLCGSAFKNKGVQPMLDAVIDYLPSPLDVENVEGHVPGKEDEVINRRPSADEPFAALAFKIAVHPFFGKLTYIRVYSGKVDSGAQVINATKGKKERLGKLFQMHANKENPVPEVSAGHIYAVIGLKDTTTGDTLCDPQNQIVLESMTFPDPVIEVSIEPKTKSDQEKLGTAIQKLAEEDPTFSVKLDPETGQTVIGGMGELHLDILVDRMKREFKVEANVGKPQVAYRETITKTVEKLEYTHKKQTGGSGQFAKVIIALEPFVGEDGAHYEFENKVTGGRVPKEYIPSVDAGAQDAMQYGVLAGYPLVNLKVTLLDGAYHDVDSSEMAFKIAGAQALKEAARKAGPVILEPMMAVEVITPEDYMGDVIGDLNSRRGQIQAMEERSGARVVKALVPLSEMFGYIGDLRSKTQGRANYSMVFDSYAEVPANVSKEIIAKATGE.

In terms of domain architecture, tr-type G spans 10 to 286; it reads KKVRNIGIMA…AVIDYLPSPL (277 aa). Residues 19–26, 83–87, and 137–140 contribute to the GTP site; these read AHIDAGKT, DTPGH, and NKMD.

This sequence belongs to the TRAFAC class translation factor GTPase superfamily. Classic translation factor GTPase family. EF-G/EF-2 subfamily.

It is found in the cytoplasm. Catalyzes the GTP-dependent ribosomal translocation step during translation elongation. During this step, the ribosome changes from the pre-translocational (PRE) to the post-translocational (POST) state as the newly formed A-site-bound peptidyl-tRNA and P-site-bound deacylated tRNA move to the P and E sites, respectively. Catalyzes the coordinated movement of the two tRNA molecules, the mRNA and conformational changes in the ribosome. The protein is Elongation factor G of Nocardia farcinica (strain IFM 10152).